Here is a 234-residue protein sequence, read N- to C-terminus: uncharacterized protein (234 aa).

6 helical membrane passes run 5 to 23, 38 to 60, 73 to 92, 127 to 149, 170 to 192, and 197 to 217; these read LFYI…LWSF, IPTA…GFWV, AHIQ…AHGW, AITL…YIWL, GVAI…TVIS, and TQAG…ALAF.

It localises to the cell membrane. This is an uncharacterized protein from Archaeoglobus fulgidus (strain ATCC 49558 / DSM 4304 / JCM 9628 / NBRC 100126 / VC-16).